We begin with the raw amino-acid sequence, 477 residues long: Oleate hydroxylase FAH12 (477 aa).

The disordered stretch occupies residues 26–48; sequence YESSAAVSPAESPRTSASSTSLS. The segment covering 27-48 has biased composition (low complexity); it reads ESSAAVSPAESPRTSASSTSLS. Helical transmembrane passes span 101–118 and 133–153; these read AYVLRDLLCLSTTFYLFH and FVLWSIYTVLQGLFATGLWVI. The Histidine box-1 motif lies at 155–159; it reads HECGH. The chain crosses the membrane as a helical span at residues 167-187; the sequence is FISDLTGWVIHSALLVPYFSW. The Histidine box-2 motif lies at 191–195; the sequence is HSAHH. 3 consecutive transmembrane segments (helical) span residues 234–254, 299–319, and 327–347; these read PIYTALHLVGKQLIGWPSYLM, YIVLSDIGLGLAIAALVYLGN, and AVWYFLPYLWVNHWLVAITFL.

This sequence belongs to the fatty acid desaturase type 1 family.

The protein resides in the microsome membrane. The enzyme catalyses (9Z)-octadecenoate + AH2 + O2 = (12R)-hydroxy-(9Z)-octadecenoate + A + H2O. It functions in the pathway lipid metabolism; monounsaturated fatty acid biosynthesis. Oleate hydroxylase involved in the biosynthesis of ricinoleate (12-hydroxy-cis-9-octadecenoate), that is present at high levels in C.purpurea sclerotium tissue. Exhibits delta(12) hydroxylase activity on 16C and 18C monounsaturated fatty acids (i.e. oleic and palmitoleic acids), and, to a lower extent, gamma(3) hydroxylase activity on ricinoleate. This Claviceps purpurea (Ergot fungus) protein is Oleate hydroxylase FAH12.